The primary structure comprises 296 residues: Fructose-bisphosphate aldolase class 1 (296 aa).

The active-site Proton acceptor is glutamate 175. Lysine 212 acts as the Schiff-base intermediate with dihydroxyacetone-P in catalysis.

It belongs to the class I fructose-bisphosphate aldolase family.

The catalysed reaction is beta-D-fructose 1,6-bisphosphate = D-glyceraldehyde 3-phosphate + dihydroxyacetone phosphate. It participates in carbohydrate degradation; glycolysis; D-glyceraldehyde 3-phosphate and glycerone phosphate from D-glucose: step 4/4. The chain is Fructose-bisphosphate aldolase class 1 (fda) from Staphylococcus carnosus (strain TM300).